A 90-amino-acid polypeptide reads, in one-letter code: Small ribosomal subunit protein uS15 (90 aa).

It belongs to the universal ribosomal protein uS15 family. Part of the 30S ribosomal subunit. Forms a bridge to the 50S subunit in the 70S ribosome, contacting the 23S rRNA.

Functionally, one of the primary rRNA binding proteins, it binds directly to 16S rRNA where it helps nucleate assembly of the platform of the 30S subunit by binding and bridging several RNA helices of the 16S rRNA. Its function is as follows. Forms an intersubunit bridge (bridge B4) with the 23S rRNA of the 50S subunit in the ribosome. This is Small ribosomal subunit protein uS15 from Helicobacter pylori (strain P12).